A 142-amino-acid polypeptide reads, in one-letter code: SLSTKDKAVVKGFWSKISGKSDEIGTEAVGRMLTVYPQTKAYFSHWPETTPGSAPVKKHGARILGAINDAVNRIDDMAGALGSLSELHANKLCVDPANFKILAHCLMASICLFYPTDFTPEVHLSVDKFLQNLALALADRYR.

Position 1 is an N-acetylserine (Ser-1). Positions 1-142 constitute a Globin domain; it reads SLSTKDKAVV…LALALADRYR (142 aa). His-59 provides a ligand contact to O2. His-88 serves as a coordination point for heme b.

Belongs to the globin family. As to quaternary structure, heterotetramer of two alpha chains and two beta chains. Red blood cells.

Its function is as follows. Involved in oxygen transport from gills to the various peripheral tissues. The sequence is that of Hemoglobin anodic subunit alpha from Gymnothorax unicolor (Brown moray).